The following is a 450-amino-acid chain: Glucose-6-phosphate isomerase (450 aa).

Glu291 acts as the Proton donor in catalysis. Active-site residues include His312 and Lys426.

This sequence belongs to the GPI family.

The protein localises to the cytoplasm. It catalyses the reaction alpha-D-glucose 6-phosphate = beta-D-fructose 6-phosphate. It functions in the pathway carbohydrate biosynthesis; gluconeogenesis. The protein operates within carbohydrate degradation; glycolysis; D-glyceraldehyde 3-phosphate and glycerone phosphate from D-glucose: step 2/4. Its function is as follows. Catalyzes the reversible isomerization of glucose-6-phosphate to fructose-6-phosphate. In Clostridium botulinum (strain Loch Maree / Type A3), this protein is Glucose-6-phosphate isomerase.